Here is a 377-residue protein sequence, read N- to C-terminus: Peptide chain release factor 2 (377 aa).

The residue at position 257 (Gln-257) is an N5-methylglutamine.

This sequence belongs to the prokaryotic/mitochondrial release factor family. Methylated by PrmC. Methylation increases the termination efficiency of RF2.

It localises to the cytoplasm. Its function is as follows. Peptide chain release factor 2 directs the termination of translation in response to the peptide chain termination codons UGA and UAA. In Lactiplantibacillus plantarum (strain ATCC BAA-793 / NCIMB 8826 / WCFS1) (Lactobacillus plantarum), this protein is Peptide chain release factor 2.